The chain runs to 419 residues: Delta(8)-fatty-acid desaturase (419 aa).

The Cytochrome b5 heme-binding domain maps to 1–64 (MKSKRQALSP…LKRMPKINPS (64 aa)). 2 residues coordinate heme: H24 and H47. Residues 110 to 130 (LGVLGYFLMVQYQMYFIGAVL) form a helical membrane-spanning segment. The short motif at 143-147 (HDICH) is the Histidine box-1 element. A helical membrane pass occupies residues 156-176 (WNNLVGLVFGNGLQGFSVTCW). The Histidine box-2 signature appears at 180–184 (HNAHH). 3 helical membrane passes run 226–246 (YFLV…VLTV), 266–286 (IGLA…MPSI), and 290–310 (LLVF…VVFM). The short motif at 355–359 (QIEHH) is the Histidine box-3 element.

Belongs to the fatty acid desaturase type 1 family. Fe cation is required as a cofactor.

It is found in the membrane. It catalyses the reaction an (11Z,14Z)-icosadienoyl-containing glycerolipid + 2 Fe(II)-[cytochrome b5] + O2 + 2 H(+) = an (8Z,11Z,14Z)-icosatrienoyl-containing glycerolipid + 2 Fe(III)-[cytochrome b5] + 2 H2O. The enzyme catalyses an (11Z,14Z,17Z)-icosatrienoyl-containing glycerolipid + 2 Fe(II)-[cytochrome b5] + O2 + 2 H(+) = an (8Z,11Z,14Z,17Z)-eicosatetraenoyl-containing glycerolipid + 2 Fe(III)-[cytochrome b5] + 2 H2O. The catalysed reaction is an (11Z)-eicosenoyl-containing glycerolipid + 2 Fe(II)-[cytochrome b5] + O2 + 2 H(+) = a (8Z,11Z)-eicosadienoyl-containing glycerolipid + 2 Fe(III)-[cytochrome b5] + 2 H2O. It participates in lipid metabolism; fatty acid metabolism. Its function is as follows. Delta(8)-fatty-acid desaturase which introduces a double bond at the 8-position in 20-carbon chain length fatty acids (C20) that have an existing delta-11 unsaturation (double bond). Whether it acts on CoA-linked substrates (as in animals) or phospholipid-linked substrates (as in plants and fungi) is still not clear. This is Delta(8)-fatty-acid desaturase (efd1) from Euglena gracilis.